A 382-amino-acid polypeptide reads, in one-letter code: Dual-specificity RNA methyltransferase RlmN (382 aa).

Glu95 (proton acceptor) is an active-site residue. A Radical SAM core domain is found at Glu101–Asp348. Cys108 and Cys353 are disulfide-bonded. 3 residues coordinate [4Fe-4S] cluster: Cys115, Cys119, and Cys122. S-adenosyl-L-methionine-binding positions include Gly179–Glu180, Ser211, Ser233–His235, and Asn310. Catalysis depends on Cys353, which acts as the S-methylcysteine intermediate.

The protein belongs to the radical SAM superfamily. RlmN family. It depends on [4Fe-4S] cluster as a cofactor.

The protein resides in the cytoplasm. It carries out the reaction adenosine(2503) in 23S rRNA + 2 reduced [2Fe-2S]-[ferredoxin] + 2 S-adenosyl-L-methionine = 2-methyladenosine(2503) in 23S rRNA + 5'-deoxyadenosine + L-methionine + 2 oxidized [2Fe-2S]-[ferredoxin] + S-adenosyl-L-homocysteine. It catalyses the reaction adenosine(37) in tRNA + 2 reduced [2Fe-2S]-[ferredoxin] + 2 S-adenosyl-L-methionine = 2-methyladenosine(37) in tRNA + 5'-deoxyadenosine + L-methionine + 2 oxidized [2Fe-2S]-[ferredoxin] + S-adenosyl-L-homocysteine. Its function is as follows. Specifically methylates position 2 of adenine 2503 in 23S rRNA and position 2 of adenine 37 in tRNAs. m2A2503 modification seems to play a crucial role in the proofreading step occurring at the peptidyl transferase center and thus would serve to optimize ribosomal fidelity. In Bordetella parapertussis (strain 12822 / ATCC BAA-587 / NCTC 13253), this protein is Dual-specificity RNA methyltransferase RlmN.